Here is a 337-residue protein sequence, read N- to C-terminus: Glyceraldehyde-3-phosphate dehydrogenase (337 aa).

Residues 17 to 18 (RI), Asp39, Lys83, and Ser125 contribute to the NAD(+) site. D-glyceraldehyde 3-phosphate contacts are provided by residues 156 to 158 (SCT), Thr187, Arg202, 215 to 216 (TG), and Arg238. Cys157 (nucleophile) is an active-site residue. An NAD(+)-binding site is contributed by Asn319.

This sequence belongs to the glyceraldehyde-3-phosphate dehydrogenase family. In terms of assembly, homotetramer.

It is found in the cytoplasm. It carries out the reaction D-glyceraldehyde 3-phosphate + phosphate + NAD(+) = (2R)-3-phospho-glyceroyl phosphate + NADH + H(+). It functions in the pathway carbohydrate degradation; glycolysis; pyruvate from D-glyceraldehyde 3-phosphate: step 1/5. Functionally, catalyzes the oxidative phosphorylation of glyceraldehyde 3-phosphate (G3P) to 1,3-bisphosphoglycerate (BPG) using the cofactor NAD. The first reaction step involves the formation of a hemiacetal intermediate between G3P and a cysteine residue, and this hemiacetal intermediate is then oxidized to a thioester, with concomitant reduction of NAD to NADH. The reduced NADH is then exchanged with the second NAD, and the thioester is attacked by a nucleophilic inorganic phosphate to produce BPG. This is Glyceraldehyde-3-phosphate dehydrogenase (gapA) from Mycoplasma genitalium (strain ATCC 33530 / DSM 19775 / NCTC 10195 / G37) (Mycoplasmoides genitalium).